A 640-amino-acid polypeptide reads, in one-letter code: 1,4-alpha-glucan branching enzyme GlgB (640 aa).

Aspartate 318 serves as the catalytic Nucleophile. The active-site Proton donor is the glutamate 371.

Belongs to the glycosyl hydrolase 13 family. GlgB subfamily. In terms of assembly, monomer.

It carries out the reaction Transfers a segment of a (1-&gt;4)-alpha-D-glucan chain to a primary hydroxy group in a similar glucan chain.. Its pathway is glycan biosynthesis; glycogen biosynthesis. Catalyzes the formation of the alpha-1,6-glucosidic linkages in glycogen by scission of a 1,4-alpha-linked oligosaccharide from growing alpha-1,4-glucan chains and the subsequent attachment of the oligosaccharide to the alpha-1,6 position. The polypeptide is 1,4-alpha-glucan branching enzyme GlgB (Francisella tularensis subsp. mediasiatica (strain FSC147)).